A 541-amino-acid polypeptide reads, in one-letter code: Chaperonin GroEL (541 aa).

ATP-binding positions include 30–33, Lys51, 87–91, Gly415, and Asp495; these read TLGP and DGTTT.

This sequence belongs to the chaperonin (HSP60) family. In terms of assembly, forms a cylinder of 14 subunits composed of two heptameric rings stacked back-to-back. Interacts with the co-chaperonin GroES.

It is found in the cytoplasm. It catalyses the reaction ATP + H2O + a folded polypeptide = ADP + phosphate + an unfolded polypeptide.. Together with its co-chaperonin GroES, plays an essential role in assisting protein folding. The GroEL-GroES system forms a nano-cage that allows encapsulation of the non-native substrate proteins and provides a physical environment optimized to promote and accelerate protein folding. This Pantoea ananas (Erwinia uredovora) protein is Chaperonin GroEL.